The following is a 116-amino-acid chain: MRVKRGFKARRRRNKVLKLAKGFRGSRSKLYRTAADAVDKALGYAYRDRRAKKRDFRKLWIARINAASKMNNISYSKLIHGLKLAKVELDRKVLADLAVSDPAGFSQIALKAAAQL.

It belongs to the bacterial ribosomal protein bL20 family.

Functionally, binds directly to 23S ribosomal RNA and is necessary for the in vitro assembly process of the 50S ribosomal subunit. It is not involved in the protein synthesizing functions of that subunit. The polypeptide is Large ribosomal subunit protein bL20 (Desulforapulum autotrophicum (strain ATCC 43914 / DSM 3382 / VKM B-1955 / HRM2) (Desulfobacterium autotrophicum)).